The sequence spans 89 residues: Large ribosomal subunit protein eL34 (89 aa).

The tract at residues 1–22 (MPAPRYKSGSSKKVYRKAPGNS) is disordered.

This sequence belongs to the eukaryotic ribosomal protein eL34 family.

The protein is Large ribosomal subunit protein eL34 of Methanococcus maripaludis (strain C7 / ATCC BAA-1331).